The following is a 68-amino-acid chain: UPF0435 protein SAB1812c (68 aa).

It belongs to the UPF0435 family.

This is UPF0435 protein SAB1812c from Staphylococcus aureus (strain bovine RF122 / ET3-1).